Consider the following 289-residue polypeptide: Rhodopsin (289 aa).

The Extracellular segment spans residues 1–7; that stretch reads YLVSPAA. The helical transmembrane segment at 8-32 threads the bilayer; that stretch reads YAALGAYMFLLILVGFPVNFLTLYV. Residues 33 to 44 are Cytoplasmic-facing; the sequence is TLDHKKLRTPLN. Residues 45–67 traverse the membrane as a helical segment; it reads YILLNLAVADLFMVLGGFTTTMY. Over 68 to 81 the chain is Extracellular; it reads TSMHGYFVLGRLGC. Cysteines 81 and 158 form a disulfide. Residues 82-104 traverse the membrane as a helical segment; the sequence is NLEGFFATLGGEIALWSLVVLAI. The 'Ionic lock' involved in activated form stabilization signature appears at 105–107; that stretch reads ERW. The Cytoplasmic portion of the chain corresponds to 105–123; the sequence is ERWIVVCKPISNFRFTEDH. A helical transmembrane segment spans residues 124 to 144; the sequence is AIMGLAFSWVMALTCAVPPLV. The Extracellular portion of the chain corresponds to 145 to 173; the sequence is GWSRYIPEGMQCSCGVDYYTRAEGFNTES. Residues 174–195 form a helical membrane-spanning segment; the sequence is FVLYMFTVHFLIPLSVIFFCYG. Topologically, residues 196-223 are cytoplasmic; it reads RLLCAVKEAAAAQQESETTQRAEKEVSR. Residues 224-245 form a helical membrane-spanning segment; that stretch reads MVVLMVIGFLVCWLPYASVAWW. Over 246-257 the chain is Extracellular; the sequence is IFCNQGSEFGPI. A helical transmembrane segment spans residues 258-279; it reads FMTLPAFFAKTSAIYNPLIYIC. Residue Lys-267 is modified to N6-(retinylidene)lysine. Residues 280–289 lie on the Cytoplasmic side of the membrane; that stretch reads MNKQFRHCMI.

This sequence belongs to the G-protein coupled receptor 1 family. Opsin subfamily. In terms of processing, phosphorylated on some or all of the serine and threonine residues present in the C-terminal region. Contains one covalently linked retinal chromophore.

Its subcellular location is the membrane. The protein localises to the cell projection. The protein resides in the cilium. It localises to the photoreceptor outer segment. Functionally, photoreceptor required for image-forming vision at low light intensity. While most salt water fish species use retinal as chromophore, most freshwater fish use 3-dehydroretinal, or a mixture of retinal and 3-dehydroretinal. Light-induced isomerization of 11-cis to all-trans retinal triggers a conformational change that activates signaling via G-proteins. Subsequent receptor phosphorylation mediates displacement of the bound G-protein alpha subunit by arrestin and terminates signaling. The protein is Rhodopsin (rho) of Procottus jeittelesii (Red sculpin).